A 453-amino-acid polypeptide reads, in one-letter code: Growth/differentiation factor 9 (453 aa).

The signal sequence occupies residues 1–27 (MALPNKFFLWFCCFAWLCFPISLDSLP). Positions 28–318 (SRGEAQIVAR…EGVRSSRHRR (291 aa)) are excised as a propeptide. 4 N-linked (GlcNAc...) asparagine glycosylation sites follow: asparagine 163, asparagine 236, asparagine 255, and asparagine 269. The disordered stretch occupies residues 282 to 328 (LHPKRKPSQGPDQRRELSAYPVGEEAAEGVRSSRHRRDQESVSSELK). Residues 318–328 (RDQESVSSELK) show a composition bias toward basic and acidic residues. N-linked (GlcNAc...) asparagine glycosylation occurs at asparagine 337. 3 disulfides stabilise this stretch: cysteine 352–cysteine 418, cysteine 381–cysteine 450, and cysteine 385–cysteine 452.

This sequence belongs to the TGF-beta family. Homodimer or heterodimer (Potential). But, in contrast to other members of this family, cannot be disulfide-linked. Phosphorylated; phosphorylation is critical for GDF9 function.

It is found in the secreted. Required for ovarian folliculogenesis. The chain is Growth/differentiation factor 9 (GDF9) from Capra hircus (Goat).